The sequence spans 469 residues: Putative dipeptidase SE_1424 (469 aa).

His-84 is a Zn(2+) binding site. Asp-86 is an active-site residue. Asp-115 is a binding site for Zn(2+). Glu-149 (proton acceptor) is an active-site residue. Zn(2+)-binding residues include Glu-150, Asp-173, and His-440.

It belongs to the peptidase M20A family. Zn(2+) is required as a cofactor.

The protein is Putative dipeptidase SE_1424 of Staphylococcus epidermidis (strain ATCC 12228 / FDA PCI 1200).